The chain runs to 1305 residues: MIGCHCHTDRSNIRLLDSTNSVKELLKTAVKMEYKGLAITDHEVLSAHLDAIRTVREMKKKGDMPEDFKLILGNEAYLVDSLEEVRDNYKSGVTKFPHFLMLAMDPKGHEQLRILSSQAWENSFYTGTMERVPTVKKDVEELLSKDPGHIIATTACLGSEVNIHLLKIKAFEETGDSQSIKQHKLKIHEFITWCIEVFGKDKFFIELQPALSEEQIYCNKKLIDIANGYDLQMIVTTDAHYLRPEDRAIHQAFLNAKDGEREVDSFYEACFVQNVDEIHERMDYIDKEVIDQAIKNTMLIGEMIEDYTIEHEPIIPKMELPNFKLRHLFKPAYDQYEYIKKMSESADEQDRYLLKLIEDGFEEKLKTSELTREAFHKILNRINVELGELWEISQKLNQSMSSYYITVREIINIIWDDECGGDSLVGAARGSAAGYLVNYLLDNTQINPMQYDLPHWRHIHKSRPDLPDIDIDTEGSKRQKILKALRERFGDKRVLQIATFGTEGSKSALQTACRGLGIDNDISQYLSGMIPFERGSNWPLKHCFYGDKETGRKPIKEFIREVEQYPNLKETALKIEGLTNKRSSHAAGVIIFNDEYTKSNAMMKTPKGAYITQFNMGDSEAMGSVKFDLLTIEALDKIRVTLDQLIENNEIEWQGSLKETYNKYIHPDVIEYEDDKLWEMAGNGEIMDLFQFSTEVGHQSVVKVKPKNLLEAAVTNSLMRLMSDGEEQPVDTYVKYKNNLNKWYEEMTRYGLSEKEIRVMERHLKDIYGVADTQEVVMQMVMDKDIANFDIKESNYLRKSIAKKKEDVLKEVEELFFKKGKEIGTSDNLLNYVWNVQFKRQFGYSFSLLHTLAYSIIALQELNLNYRYNPLYWNTACLTVNSGGIDTEDTKDNKKTAATNYGKVASAIGNIRQRGIKIDLPDINKADFGFRTDINNNSILFGLKGMNGIGDDVIHHIVLNRPYSDFNDFIERMFKSGIIKKGQVIQLIKGGCFDSFGNRQEIMKAFISLISEPKSKLTLSNLKMLIENNIVPSEFAQEVRFFRFKDYISKKVYKTLKSPKDKLFLLDDVSASFYNQHFSEDSVVDMLNGQLVISEKAFKKEYDNKMSNIKSWITTEEPLKKLNDCLLIKEWEKYADGSLGKWEMDSLSYYYNDHELSGVNFAKYDIADFYKLPAEPVKGKPYQWRGKTLYEYETTRIIGTVLDRDKNKHAITLLTPTGVVTVKQWSGSFSHYNKQISRSIGGGKKEVIEKSWYTRGTLLMFTGFRRGNNFIPKVYKDSIYNHTVCRIDFVDNEGSMSLTTKRAEI.

It belongs to the DNA polymerase type-C family.

The enzyme catalyses DNA(n) + a 2'-deoxyribonucleoside 5'-triphosphate = DNA(n+1) + diphosphate. In terms of biological role, replicates viral genomic DNA. The protein is DNA-directed DNA polymerase of Bacillus pumilus (Bacillus mesentericus).